A 268-amino-acid polypeptide reads, in one-letter code: Thiazole synthase (268 aa).

Residue Lys100 is the Schiff-base intermediate with DXP of the active site. 1-deoxy-D-xylulose 5-phosphate contacts are provided by residues Gly161, 187-188, and 209-210; these read AG and NT. A disordered region spans residues 248 to 268; sequence ASPSSPAEGMFTGTQHPAANS. The segment covering 259-268 has biased composition (polar residues); that stretch reads TGTQHPAANS.

The protein belongs to the ThiG family. In terms of assembly, homotetramer. Forms heterodimers with either ThiH or ThiS.

The protein localises to the cytoplasm. It carries out the reaction [ThiS sulfur-carrier protein]-C-terminal-Gly-aminoethanethioate + 2-iminoacetate + 1-deoxy-D-xylulose 5-phosphate = [ThiS sulfur-carrier protein]-C-terminal Gly-Gly + 2-[(2R,5Z)-2-carboxy-4-methylthiazol-5(2H)-ylidene]ethyl phosphate + 2 H2O + H(+). Its pathway is cofactor biosynthesis; thiamine diphosphate biosynthesis. Functionally, catalyzes the rearrangement of 1-deoxy-D-xylulose 5-phosphate (DXP) to produce the thiazole phosphate moiety of thiamine. Sulfur is provided by the thiocarboxylate moiety of the carrier protein ThiS. In vitro, sulfur can be provided by H(2)S. In Nitrosomonas europaea (strain ATCC 19718 / CIP 103999 / KCTC 2705 / NBRC 14298), this protein is Thiazole synthase.